The sequence spans 485 residues: GTPase Obg (485 aa).

Residues 2-159 (PRFVDRVVIH…RDLTLELKTV (158 aa)) enclose the Obg domain. The OBG-type G domain maps to 160 to 341 (ADVGLIGFPS…LIFALWEMVK (182 aa)). Residues 166 to 173 (GFPSAGKS), 191 to 195 (FTTLV), 212 to 215 (DVPG), 292 to 295 (NKID), and 322 to 324 (STV) contribute to the GTP site. The Mg(2+) site is built by S173 and T193. Positions 359–437 (PIPVDESGFT…IGDVTFDWEP (79 aa)) constitute an OCT domain. Residues 450–485 (RGTDIRLEQTDRVGAAERKAARRERRQPGESGGEDS) form a disordered region. Residues 452–468 (TDIRLEQTDRVGAAERK) show a composition bias toward basic and acidic residues.

Belongs to the TRAFAC class OBG-HflX-like GTPase superfamily. OBG GTPase family. As to quaternary structure, monomer. Mg(2+) is required as a cofactor.

Its subcellular location is the cytoplasm. Its function is as follows. An essential GTPase which binds GTP, GDP and possibly (p)ppGpp with moderate affinity, with high nucleotide exchange rates and a fairly low GTP hydrolysis rate. Plays a role in control of the cell cycle, stress response, ribosome biogenesis and in those bacteria that undergo differentiation, in morphogenesis control. The protein is GTPase Obg of Mycolicibacterium smegmatis (strain ATCC 700084 / mc(2)155) (Mycobacterium smegmatis).